Here is a 128-residue protein sequence, read N- to C-terminus: MEVIHKIGRRKTAVARVYVSEGKGNITVNKKDLKDYFTTGTLLYKVNQPMMLTENEGNFDVKINVYGGGITGQAEAIRLALSRAMVALDEENHGALKPEGLLTRDPRMVERKKYGQKKARKKFQFSKR.

It belongs to the universal ribosomal protein uS9 family.

This is Small ribosomal subunit protein uS9 from Christiangramia forsetii (strain DSM 17595 / CGMCC 1.15422 / KT0803) (Gramella forsetii).